Here is a 223-residue protein sequence, read N- to C-terminus: uncharacterized protein (223 aa).

This is an uncharacterized protein from Treponema pallidum (strain Nichols).